The chain runs to 66 residues: Large ribosomal subunit protein uL29 (66 aa).

The protein belongs to the universal ribosomal protein uL29 family.

The sequence is that of Large ribosomal subunit protein uL29 from Thermococcus onnurineus (strain NA1).